We begin with the raw amino-acid sequence, 120 residues long: Myohemerythrin (120 aa).

The Fe cation site is built by His26, His56, Glu60, His75, His79, His108, and Asp113.

Belongs to the hemerythrin family.

Its function is as follows. Myohemerythrin is an oxygen-binding protein found in the retractor muscles of certain worms. The oxygen-binding site contains two iron atoms. This chain is Myohemerythrin, found in Riftia pachyptila (Vent tube worm).